Here is a 232-residue protein sequence, read N- to C-terminus: MYYTRITQIERLTDEVATLYFSISLRSYPGQFVMVYVPGCEEIPLSLSSSNSVTVKAVGETTASLINAKEGQYVGVRGAFGSAFTPSKRALIVAGGIGIAPMKYLYEYLMKCGSKVSVVYGERTAKNLFWLDKFDRITVTTEDGSFGLKGTVLDALKLEKLDEYEKIYVCGSEGMLRATYDFLKERDALDKAEFSLERYMRCGIGVCGSCVIENGLRVCADGPVFNASELPW.

The 86-residue stretch at 1–86 (MYYTRITQIE…RGAFGSAFTP (86 aa)) folds into the FAD-binding FR-type domain. [2Fe-2S] cluster contacts are provided by cysteine 202, cysteine 207, cysteine 210, and cysteine 219.

The protein belongs to the PyrK family. As to quaternary structure, heterotetramer of 2 PyrK and 2 PyrD type B subunits. [2Fe-2S] cluster serves as cofactor. It depends on FAD as a cofactor.

Its pathway is pyrimidine metabolism; UMP biosynthesis via de novo pathway; orotate from (S)-dihydroorotate (NAD(+) route): step 1/1. Responsible for channeling the electrons from the oxidation of dihydroorotate from the FMN redox center in the PyrD type B subunit to the ultimate electron acceptor NAD(+). The sequence is that of Probable dihydroorotate dehydrogenase B (NAD(+)), electron transfer subunit from Archaeoglobus fulgidus (strain ATCC 49558 / DSM 4304 / JCM 9628 / NBRC 100126 / VC-16).